A 479-amino-acid chain; its full sequence is MADFLTLSPEVNSARMYAGGGPGSLSAAAAAWDELAAELWLAAASFESVCSGLADRWWQGPSSRMMAAQAARHTGWLAAAATQAEGAASQAQTMALAYEAAFAATVHPALVAANRALVAWLAGSNVFGQNTPAIAAAEAIYEQMWAQDVVAMLNYHAVASAVGARLRPWQQLLHELPRRLGGEHSDSTNTELANPSSTTTRITVPGASPVHAATLLPFIGRLLAARYAELNTAIGTNWFPGTTPEVVSYPATIGVLSGSLGAVDANQSIAIGQQMLHNEILAATASGQPVTVAGLSMGSMVIDRELAYLAIDPNAPPSSALTFVELAGPERGLAQTYLPVGTTIPIAGYTVGNAPESQYNTSVVYSQYDIWADPPDRPWNLLAGANALMGAAYFHDLTAYAAPQQGIEIAAVTSSLGGTTTTYMIPSPTLPLLLPLKQIGVPDWIVGGLNNVLKPLVDAGYSQYAPTAGPYFSHGNLVW.

The tract at residues 180–203 is disordered; it reads LGGEHSDSTNTELANPSSTTTRIT. Residues 187-202 show a composition bias toward polar residues; the sequence is STNTELANPSSTTTRI. One can recognise a PE-PPE domain in the interval 240–462; it reads PGTTPEVVSY…LKPLVDAGYS (223 aa).

The protein belongs to the mycobacterial PPE family.

This is an uncharacterized protein from Mycobacterium tuberculosis (strain CDC 1551 / Oshkosh).